The sequence spans 859 residues: Kinesin-like protein KIN-14T (859 aa).

The Kinesin motor domain maps to 91-411 (NIRVFCRVKP…LNFATRAKNI (321 aa)). 168 to 175 (GQTGTGKT) lines the ATP pocket. A coiled-coil region spans residues 422-463 (QAKKEAVMMNLQKMMEKIEQEREMSLRKMRNLNETLEKLTGK). The interval 511-530 (LSGADFSVTPNSSSFKSRRN) is disordered. Residues 518–530 (VTPNSSSFKSRRN) are compositionally biased toward polar residues.

This sequence belongs to the TRAFAC class myosin-kinesin ATPase superfamily. Kinesin family. KIN-14 subfamily.

The chain is Kinesin-like protein KIN-14T from Arabidopsis thaliana (Mouse-ear cress).